The following is a 173-amino-acid chain: Large ribosomal subunit protein uL10 (173 aa).

Belongs to the universal ribosomal protein uL10 family. As to quaternary structure, part of the ribosomal stalk of the 50S ribosomal subunit. The N-terminus interacts with L11 and the large rRNA to form the base of the stalk. The C-terminus forms an elongated spine to which L12 dimers bind in a sequential fashion forming a multimeric L10(L12)X complex.

Forms part of the ribosomal stalk, playing a central role in the interaction of the ribosome with GTP-bound translation factors. The chain is Large ribosomal subunit protein uL10 from Chloroherpeton thalassium (strain ATCC 35110 / GB-78).